A 262-amino-acid chain; its full sequence is Ribosomal RNA small subunit methyltransferase A (262 aa).

Residues H16, L18, G43, E64, D89, and N109 each contribute to the S-adenosyl-L-methionine site.

This sequence belongs to the class I-like SAM-binding methyltransferase superfamily. rRNA adenine N(6)-methyltransferase family. RsmA subfamily.

It localises to the cytoplasm. It carries out the reaction adenosine(1518)/adenosine(1519) in 16S rRNA + 4 S-adenosyl-L-methionine = N(6)-dimethyladenosine(1518)/N(6)-dimethyladenosine(1519) in 16S rRNA + 4 S-adenosyl-L-homocysteine + 4 H(+). Functionally, specifically dimethylates two adjacent adenosines (A1518 and A1519) in the loop of a conserved hairpin near the 3'-end of 16S rRNA in the 30S particle. May play a critical role in biogenesis of 30S subunits. This is Ribosomal RNA small subunit methyltransferase A from Xanthomonas axonopodis pv. citri (strain 306).